A 313-amino-acid polypeptide reads, in one-letter code: Nucleotide-binding protein Swit_0399 (313 aa).

20–27 (GMSGSGKK) provides a ligand contact to ATP. 73-76 (DSRT) lines the GTP pocket. A disordered region spans residues 289 to 313 (PTVRHRDLTRQKSNAEESTVPGVGS). Residues 292-303 (RHRDLTRQKSNA) show a composition bias toward basic and acidic residues.

This sequence belongs to the RapZ-like family.

Displays ATPase and GTPase activities. This chain is Nucleotide-binding protein Swit_0399, found in Rhizorhabdus wittichii (strain DSM 6014 / CCUG 31198 / JCM 15750 / NBRC 105917 / EY 4224 / RW1) (Sphingomonas wittichii).